The chain runs to 494 residues: GlcNAc-binding protein A (494 aa).

The signal sequence occupies residues 1-21 (MKLNKIMLAMVVMSISGTAMA). The region spanning 22–192 (HGYIENPPSR…TFYNMIDAEF (171 aa)) is the Chitin-binding type-4 domain. The 50-residue stretch at 435-484 (APAWSNKSSYQAKDTVTHNGRIYMSKWWADKASVPGDAAVTDTTGNGSGW) folds into the Chitin-binding type-3 domain. Positions 474–494 (VTDTTGNGSGWGKVWEDKGAC) are disordered.

This sequence belongs to the GbpA family.

The protein localises to the secreted. Its function is as follows. Probably interacts with GlcNAc residues. May promote attachment to both epithelial cell surfaces and chitin. The protein is GlcNAc-binding protein A of Yersinia enterocolitica serotype O:8 / biotype 1B (strain NCTC 13174 / 8081).